Reading from the N-terminus, the 332-residue chain is Biotin synthase (332 aa).

Positions Y46 to R275 constitute a Radical SAM core domain. [4Fe-4S] cluster is bound by residues C64, C68, and C71. Positions 108, 140, 200, and 270 each coordinate [2Fe-2S] cluster.

Belongs to the radical SAM superfamily. Biotin synthase family. As to quaternary structure, homodimer. Requires [4Fe-4S] cluster as cofactor. [2Fe-2S] cluster is required as a cofactor.

The enzyme catalyses (4R,5S)-dethiobiotin + (sulfur carrier)-SH + 2 reduced [2Fe-2S]-[ferredoxin] + 2 S-adenosyl-L-methionine = (sulfur carrier)-H + biotin + 2 5'-deoxyadenosine + 2 L-methionine + 2 oxidized [2Fe-2S]-[ferredoxin]. It participates in cofactor biosynthesis; biotin biosynthesis; biotin from 7,8-diaminononanoate: step 2/2. In terms of biological role, catalyzes the conversion of dethiobiotin (DTB) to biotin by the insertion of a sulfur atom into dethiobiotin via a radical-based mechanism. The polypeptide is Biotin synthase (Lysinibacillus sphaericus (Bacillus sphaericus)).